The primary structure comprises 617 residues: Vitamin B12 transporter BtuB (617 aa).

The N-terminal stretch at 1 to 22 (MRKTFLAITCASLLSPTFYSQA) is a signal peptide. Positions 29–36 (ETVVVTAN) match the TonB box motif. The region spanning 40 to 154 (QIDGAVLAQT…ISGVINIITR (115 aa)) is the TBDR plug domain. In terms of domain architecture, TBDR beta-barrel spans 159–617 (DDSGRVSAGY…QYFVSADYRF (459 aa)). Residues 600 to 617 (VGYVTPGRQYFVSADYRF) carry the TonB C-terminal box motif.

Belongs to the TonB-dependent receptor family. BtuB (TC 1.B.14.3.1) subfamily.

The protein localises to the cell outer membrane. Functionally, involved in the active translocation of vitamin B12 (cyanocobalamin) across the outer membrane to the periplasmic space. It derives its energy for transport by interacting with the trans-periplasmic membrane protein TonB. This chain is Vitamin B12 transporter BtuB, found in Vibrio campbellii (strain ATCC BAA-1116).